We begin with the raw amino-acid sequence, 423 residues long: Gamma-glutamyl phosphate reductase (423 aa).

It belongs to the gamma-glutamyl phosphate reductase family.

It is found in the cytoplasm. It carries out the reaction L-glutamate 5-semialdehyde + phosphate + NADP(+) = L-glutamyl 5-phosphate + NADPH + H(+). It functions in the pathway amino-acid biosynthesis; L-proline biosynthesis; L-glutamate 5-semialdehyde from L-glutamate: step 2/2. Functionally, catalyzes the NADPH-dependent reduction of L-glutamate 5-phosphate into L-glutamate 5-semialdehyde and phosphate. The product spontaneously undergoes cyclization to form 1-pyrroline-5-carboxylate. In Pseudomonas putida (strain GB-1), this protein is Gamma-glutamyl phosphate reductase.